The following is a 280-amino-acid chain: Cis-2,3-dihydrobiphenyl-2,3-diol dehydrogenase (280 aa).

Residue 9–33 coordinates NAD(+); sequence LVTGGCAGLGRAIVDRFVCEGARVA. Serine 142 serves as a coordination point for substrate. Tyrosine 155 functions as the Proton acceptor in the catalytic mechanism.

It belongs to the short-chain dehydrogenases/reductases (SDR) family.

It catalyses the reaction (2R,3S)-3-phenylcyclohexa-3,5-diene-1,2-diol + NAD(+) = biphenyl-2,3-diol + NADH + H(+). Its pathway is xenobiotic degradation; biphenyl degradation; 2-hydroxy-2,4-pentadienoate and benzoate from biphenyl: step 2/4. The polypeptide is Cis-2,3-dihydrobiphenyl-2,3-diol dehydrogenase (bphB) (Rhodococcus globerulus).